A 120-amino-acid chain; its full sequence is C-C motif chemokine 23 (120 aa).

The first 21 residues, 1 to 21, serve as a signal peptide directing secretion; it reads MKVSVAALSCLMLVTALGSQA. Intrachain disulfides connect C54–C78, C55–C94, and C65–C105.

The protein belongs to the intercrine beta (chemokine CC) family. Post-translationally, the N-terminal is proteolytically cleaved by proteases associated with inflammatory responses. The processed forms, CCL23(19-99), CCL23(22-99), CCL23(27-99) and CCL23(30-99) exhibit increase in CCR1-mediated signaling and chemotaxis assays in vitro. High levels in adult lung, liver, skeletal muscle and pancreas. Moderate levels in fetal liver, adult bone marrow and placenta. The short form is the major species and the longer form was detected only in very low abundance. CCL23(19-99), CCL23(22-99), CCL23(27-99), CCL23(30-99) are found in high levels in synovial fluids from rheumatoid patients.

The protein localises to the secreted. In terms of biological role, shows chemotactic activity for monocytes, resting T-lymphocytes, and neutrophils, but not for activated lymphocytes. Inhibits proliferation of myeloid progenitor cells in colony formation assays. This protein can bind heparin. Binds CCR1. CCL23(19-99), CCL23(22-99), CCL23(27-99), CCL23(30-99) are more potent chemoattractants than CCL23. In Homo sapiens (Human), this protein is C-C motif chemokine 23 (CCL23).